Reading from the N-terminus, the 274-residue chain is Penicillin-insensitive murein endopeptidase (274 aa).

The first 19 residues, 1–19, serve as a signal peptide directing secretion; sequence MNKTAIALLALLASSASLA. Disulfide bonds link C44–C265, C187–C235, and C216–C223. Residues H110, H113, D120, D147, H150, and H211 each contribute to the Zn(2+) site. Residues 227–274 are disordered; sequence PLPPPGDGCGAELQSWFEPPKPGTTKPEKKTPPPLPPSCQALLDEHVI.

Belongs to the peptidase M74 family. As to quaternary structure, dimer. Requires Zn(2+) as cofactor.

It localises to the periplasm. Murein endopeptidase that cleaves the D-alanyl-meso-2,6-diamino-pimelyl amide bond that connects peptidoglycan strands. Likely plays a role in the removal of murein from the sacculus. In Escherichia coli O6:K15:H31 (strain 536 / UPEC), this protein is Penicillin-insensitive murein endopeptidase.